Consider the following 201-residue polypeptide: Recombination protein RecR (201 aa).

The segment at 60–75 (CKKCFNLTSEDECEIC) adopts a C4-type zinc-finger fold. One can recognise a Toprim domain in the interval 83–177 (KLICVVAETK…KVTRIAYGLP (95 aa)).

This sequence belongs to the RecR family.

May play a role in DNA repair. It seems to be involved in an RecBC-independent recombinational process of DNA repair. It may act with RecF and RecO. This is Recombination protein RecR from Prochlorococcus marinus (strain MIT 9215).